Here is a 136-residue protein sequence, read N- to C-terminus: MRHYEIVFMVHPDQSGQVPAMIERYRSIIEGAAGRIHRLEDWGRRQLAYPIAKLHKAHYVLMNIECDQATLEELESGFRFNDAVLRSLTIRRDEAVTEPSALARSGSDAEADRAPADEGSVEAAGAEPGSEAEAEA.

Residues 96-136 (VTEPSALARSGSDAEADRAPADEGSVEAAGAEPGSEAEAEA) form a disordered region.

It belongs to the bacterial ribosomal protein bS6 family.

In terms of biological role, binds together with bS18 to 16S ribosomal RNA. This chain is Small ribosomal subunit protein bS6, found in Methylococcus capsulatus (strain ATCC 33009 / NCIMB 11132 / Bath).